The chain runs to 96 residues: Small ribosomal subunit protein bS18 (96 aa).

Positions 1–18 (MPPPRGKGRFGKDKRPKR) are enriched in basic residues. A disordered region spans residues 1 to 21 (MPPPRGKGRFGKDKRPKRNTQ).

It belongs to the bacterial ribosomal protein bS18 family. Part of the 30S ribosomal subunit. Forms a tight heterodimer with protein bS6.

Functionally, binds as a heterodimer with protein bS6 to the central domain of the 16S rRNA, where it helps stabilize the platform of the 30S subunit. This chain is Small ribosomal subunit protein bS18, found in Methylibium petroleiphilum (strain ATCC BAA-1232 / LMG 22953 / PM1).